A 191-amino-acid chain; its full sequence is Leucyl/phenylalanyl-tRNA--protein transferase (191 aa).

Belongs to the L/F-transferase family.

Its subcellular location is the cytoplasm. It carries out the reaction N-terminal L-lysyl-[protein] + L-leucyl-tRNA(Leu) = N-terminal L-leucyl-L-lysyl-[protein] + tRNA(Leu) + H(+). The catalysed reaction is N-terminal L-arginyl-[protein] + L-leucyl-tRNA(Leu) = N-terminal L-leucyl-L-arginyl-[protein] + tRNA(Leu) + H(+). The enzyme catalyses L-phenylalanyl-tRNA(Phe) + an N-terminal L-alpha-aminoacyl-[protein] = an N-terminal L-phenylalanyl-L-alpha-aminoacyl-[protein] + tRNA(Phe). In terms of biological role, functions in the N-end rule pathway of protein degradation where it conjugates Leu, Phe and, less efficiently, Met from aminoacyl-tRNAs to the N-termini of proteins containing an N-terminal arginine or lysine. The polypeptide is Leucyl/phenylalanyl-tRNA--protein transferase (Rubrobacter xylanophilus (strain DSM 9941 / JCM 11954 / NBRC 16129 / PRD-1)).